A 391-amino-acid chain; its full sequence is Polyketide synthase 5 (391 aa).

Cys-164 is a catalytic residue.

The protein belongs to the thiolase-like superfamily. Chalcone/stilbene synthases family. In terms of assembly, homodimer. Expressed in fruits.

It catalyses the reaction (E)-4-coumaroyl-CoA + 3 malonyl-CoA + 3 H(+) = 2',4,4',6'-tetrahydroxychalcone + 3 CO2 + 4 CoA. The protein operates within secondary metabolite biosynthesis; flavonoid biosynthesis. Its function is as follows. Polyketide synthase producing naringenin chalcone. Can use p-coumaryl-CoA as substrate. The polypeptide is Polyketide synthase 5 (PKS5) (Rubus idaeus (Raspberry)).